The following is a 694-amino-acid chain: Transcriptional activator HAA1 (694 aa).

The segment at residues 1–40 is a DNA-binding region (copper-fist); that stretch reads MVLINGIKYACERCIRGHRVTTCNHTDQPLMMIKPKGRPS. Residues Cys11, Cys14, Cys23, and His25 each contribute to the Zn(2+) site. 2 disordered regions span residues 104–128 and 209–240; these read QKRHLRKSPSSSQKKGRSISRSQPM and FNFLTGNINETNQNHSNHQHSKSGNNWQDSSV. Residues 111–126 are compositionally biased toward polar residues; the sequence is SPSSSQKKGRSISRSQ. Phosphoserine occurs at positions 125, 231, 241, and 291. Disordered stretches follow at residues 332 to 388, 479 to 514, 566 to 588, and 650 to 677; these read FDIN…NGLF, EKERETERSPSSNYITDRPFTRKPRSSSIDVNHRYP, SSIHSVPQSINSPRMPKTGSRQD, and MISTPSGRNDLPDTSPMSSIQTASPPSQ. A compositionally biased stretch (polar residues) spans 336 to 349; sequence DNCNRINSKSYSKT. Positions 350–378 are enriched in low complexity; sequence NSMNGNGMNNSNNNNINSNGNDKNNNNSS. Polar residues-rich tracts occupy residues 566-577 and 664-677; these read SSIHSVPQSINS and SPMSSIQTASPPSQ.

It is found in the nucleus. Its function is as follows. Regulates the transcription of a set of genes, many of which encode membrane proteins. Among the genes regulated are YGR138C and YRO2. Does not seem to be dependent on copper. In Saccharomyces cerevisiae (strain ATCC 204508 / S288c) (Baker's yeast), this protein is Transcriptional activator HAA1 (HAA1).